Here is a 227-residue protein sequence, read N- to C-terminus: Transcriptional regulatory protein TdiR (227 aa).

Positions 11–125 constitute a Response regulatory domain; the sequence is TVFVVDDEAS…DLLDAVNAAL (115 aa). At D60 the chain carries 4-aspartylphosphate. In terms of domain architecture, HTH luxR-type spans 141 to 206; that stretch reads HLDLLATLSQ…DLMHFVMRGS (66 aa). The H-T-H motif DNA-binding region spans 165 to 184; sequence SKEIAKLLGISYKTVEAHRG.

Post-translationally, phosphorylated by TdiS.

Member of the two-component regulatory system TdiR/TdiS, which probably regulates transcription of toluene catabolic genes (bss operon). Binds to DNA. The protein is Transcriptional regulatory protein TdiR (tdiR) of Thauera aromatica.